The following is a 481-amino-acid chain: Matrix metalloproteinase-20 (481 aa).

The signal sequence occupies residues 1–20 (MLPASGLAVLLVTALKFSTA). Positions 21-105 (APSLPAASPR…PRCGVPDVAN (85 aa)) are excised as a propeptide. A glycan (N-linked (GlcNAc...) asparagine) is linked at asparagine 64. The Cysteine switch motif lies at 96 to 103 (PRCGVPDV). Cysteine 98 lines the Zn(2+) pocket. Ca(2+)-binding residues include glutamate 162, alanine 163, and aspartate 164. Zn(2+) contacts are provided by histidine 174 and aspartate 176. Ca(2+) contacts are provided by aspartate 181, glycine 182, arginine 184, and threonine 186. Position 189 (histidine 189) interacts with Zn(2+). Positions 195, 196, 198, and 200 each coordinate Ca(2+). Histidine 202 is a binding site for Zn(2+). Positions 204 and 207 each coordinate Ca(2+). Histidine 224 serves as a coordination point for Zn(2+). Glutamate 225 is an active-site residue. The Zn(2+) site is built by histidine 228 and histidine 234. 4 Hemopexin repeats span residues 291–341 (PDLC…FPQL), 342–387 (MSNV…GFPR), 389–437 (VQRI…FSGV), and 438–481 (NGQI…WIGC). Cysteine 294 and cysteine 481 form a disulfide bridge. N-linked (GlcNAc...) asparagine glycosylation occurs at asparagine 297.

This sequence belongs to the peptidase M10A family. It depends on Zn(2+) as a cofactor. Ca(2+) serves as cofactor. In terms of processing, autoactivates at least at the 105-Asn-|-Tyr-106 site. In terms of tissue distribution, expressed in the enamel organ.

Its subcellular location is the secreted. It localises to the extracellular space. It is found in the extracellular matrix. In terms of biological role, degrades amelogenin, the major protein component of the enamel matrix and two of the macromolecules characterizing the cartilage extracellular matrix: aggrecan and the cartilage oligomeric matrix protein (COMP). May play a central role in tooth enamel formation. Cleaves aggrecan at the '360-Ser-|-Phe-361' site. The chain is Matrix metalloproteinase-20 (MMP20) from Bos taurus (Bovine).